The sequence spans 941 residues: Glycine dehydrogenase (decarboxylating) (941 aa).

N6-(pyridoxal phosphate)lysine is present on Lys-692.

It belongs to the GcvP family. As to quaternary structure, the glycine cleavage system is composed of four proteins: P, T, L and H. Requires pyridoxal 5'-phosphate as cofactor.

It carries out the reaction N(6)-[(R)-lipoyl]-L-lysyl-[glycine-cleavage complex H protein] + glycine + H(+) = N(6)-[(R)-S(8)-aminomethyldihydrolipoyl]-L-lysyl-[glycine-cleavage complex H protein] + CO2. The glycine cleavage system catalyzes the degradation of glycine. The P protein binds the alpha-amino group of glycine through its pyridoxal phosphate cofactor; CO(2) is released and the remaining methylamine moiety is then transferred to the lipoamide cofactor of the H protein. This Mycobacterium avium (strain 104) protein is Glycine dehydrogenase (decarboxylating).